The sequence spans 355 residues: Probable nitronate monooxygenase (355 aa).

FMN contacts are provided by residues asparagine 71, glutamine 175, glycine 180, glycine 218, and 237–240 (QMGT).

The protein belongs to the nitronate monooxygenase family. NMO class I subfamily. It depends on FMN as a cofactor.

The enzyme catalyses 3 propionate 3-nitronate + 3 O2 + H2O = 3 3-oxopropanoate + 2 nitrate + nitrite + H2O2 + 3 H(+). Functionally, nitronate monooxygenase that uses molecular oxygen to catalyze the oxidative denitrification of alkyl nitronates. Acts on propionate 3-nitronate (P3N), the presumed physiological substrate. Probably functions in the detoxification of P3N, a metabolic poison produced by plants and fungi as a defense mechanism. This chain is Probable nitronate monooxygenase, found in Staphylococcus aureus (strain MRSA252).